Reading from the N-terminus, the 266-residue chain is Signal peptidase I (266 aa).

At 1–20 (MQTDNTKSNTNKTAKQEWGS) the chain is on the cytoplasmic side. Residues 21–41 (FVFVICIALLIRILIMEPFTV) form a helical membrane-spanning segment. Over 42–266 (PTGSMKATIL…IFRNLYNTDV (225 aa)) the chain is Periplasmic. Residues serine 45 and lysine 108 contribute to the active site.

The protein belongs to the peptidase S26 family.

The protein localises to the cell inner membrane. It carries out the reaction Cleavage of hydrophobic, N-terminal signal or leader sequences from secreted and periplasmic proteins.. This Rickettsia massiliae (strain Mtu5) protein is Signal peptidase I (lepB).